Reading from the N-terminus, the 174-residue chain is MLPRITITIMSWMLLSCLMLLSQVQGEVAKKDAPSSRSSCPKGSRAYGSYCYALFSVSKNWYDADMACQKRPSGHLVSVLSGAEASFLSSMIKSSGNSGQYVWIGLHDPTLGYEPNRGGWEWSNADVMNYINWETNPSSSSGNHCGTLSRASGFLKWRENYCNLELPYVCKFKA.

The N-terminal stretch at 1 to 26 is a signal peptide; the sequence is MLPRITITIMSWMLLSCLMLLSQVQG. Positions 27–37 are excised as a propeptide; sequence EVAKKDAPSSR. Intrachain disulfides connect C40–C51, C68–C170, and C145–C162. One can recognise a C-type lectin domain in the interval 47–171; the sequence is YGSYCYALFS…CNLELPYVCK (125 aa). Residues 103 to 118 form a sufficient to activate EXTL3 region; sequence WIGLHDPTLGYEPNRG. A Zn(2+)-binding site is contributed by H107. Residues 114-116 carry the EPN motif; the sequence is EPN. Positions 121 and 144 each coordinate Zn(2+).

As to quaternary structure, forms a hexameric membrane-permeabilizing oligomeric pore on membrane phospholipids. The hexamer is formed by three dimers related by helical symmetry. Forms filaments, filamentation traps pore complexes and limits damage to host cells. Interacts with EXTL3. In terms of processing, proteolytic processing by trypsin removes an inhibitory N-terminal propeptide and is essential for peptidoglycan binding and antibacterial activity. As to expression, predominantly expressed in the small intestine, including Paneth cells (at protein level). Hardly detectable in the colon (at protein level). Highly expressed in the lung epithelium during methicillin-resistant S.aureus infection and allergic airway inflammation (at protein level). Skin injury increases its epidermal expression. Also expressed in the pancreas. Expressed by nocireceptors.

It is found in the secreted. It localises to the cytoplasm. With respect to regulation, lipopolysaccharide inhibits pore-forming activity, explaining why is bactericidal for Gram-positive but not Gram-negative bacteria. Functionally, bactericidal C-type lectin which acts exclusively against Gram-positive bacteria and mediates bacterial killing by binding to surface-exposed carbohydrate moieties of peptidoglycan. Restricts bacterial colonization of the intestinal epithelial surface and consequently limits activation of adaptive immune responses by the microbiota. Acts as a hormone in response to different stimuli like anti-inflammatory signals, such as IL17A, or gut microbiome. Is secreted by different cell types to activate its receptor EXTL3 and induce cell specific signaling pathways. Induced by IL17A in keratinocytes, regulates keratinocyte proliferation and differentiation after skin injury. In parallel, inhibits skin inflammation through the inhibition of inflammatory cytokines such as IL6 and TNF. Induced by IL22 in lung epithelial cells, inhibits cytokine production and regulates allergic airway inflammation. Induced in small intestine by inulin-enriched diet and Lactobacillus gasseri enriched microbiome, plays a role in the improvement of gut barrier function, the regulation of energy balance and glucose levels. Modulates microbiota composition in duodenal contents. Produced by nociceptor in response to endotoxins, prevents endotoxic death by targeting kynurenine pathway in microglia. In terms of biological role, has bacteriostatic activity. Its function is as follows. Has bactericidal activity against L.monocytogenes and methicillin-resistant S.aureus. This is Regenerating islet-derived protein 3-gamma from Mus musculus (Mouse).